Consider the following 259-residue polypeptide: Phosphatidylserine decarboxylase proenzyme (259 aa).

Ser-183 serves as the catalytic Schiff-base intermediate with substrate; via pyruvic acid. Ser-183 bears the Pyruvic acid (Ser); by autocatalysis mark.

It belongs to the phosphatidylserine decarboxylase family. PSD-A subfamily. In terms of assembly, heterodimer of a large membrane-associated beta subunit and a small pyruvoyl-containing alpha subunit. The cofactor is pyruvate. Is synthesized initially as an inactive proenzyme. Formation of the active enzyme involves a self-maturation process in which the active site pyruvoyl group is generated from an internal serine residue via an autocatalytic post-translational modification. Two non-identical subunits are generated from the proenzyme in this reaction, and the pyruvate is formed at the N-terminus of the alpha chain, which is derived from the carboxyl end of the proenzyme. The post-translation cleavage follows an unusual pathway, termed non-hydrolytic serinolysis, in which the side chain hydroxyl group of the serine supplies its oxygen atom to form the C-terminus of the beta chain, while the remainder of the serine residue undergoes an oxidative deamination to produce ammonia and the pyruvoyl prosthetic group on the alpha chain.

It is found in the cell membrane. The enzyme catalyses a 1,2-diacyl-sn-glycero-3-phospho-L-serine + H(+) = a 1,2-diacyl-sn-glycero-3-phosphoethanolamine + CO2. The protein operates within phospholipid metabolism; phosphatidylethanolamine biosynthesis; phosphatidylethanolamine from CDP-diacylglycerol: step 2/2. Its function is as follows. Catalyzes the formation of phosphatidylethanolamine (PtdEtn) from phosphatidylserine (PtdSer). This chain is Phosphatidylserine decarboxylase proenzyme, found in Neisseria gonorrhoeae (strain ATCC 700825 / FA 1090).